A 715-amino-acid chain; its full sequence is Fatty acid oxidation complex subunit alpha (715 aa).

Residues 1 to 190 (MIYEGKAITV…KVGAVDAVVA (190 aa)) form an enoyl-CoA hydratase/isomerase region. Residue Asp297 coordinates substrate. Positions 312–715 (HDVKQAAVLG…MAKNGQRFFN (404 aa)) are 3-hydroxyacyl-CoA dehydrogenase. NAD(+)-binding positions include Met325, Asp344, 401 to 403 (VVE), Lys408, and Ser430. His451 serves as the catalytic For 3-hydroxyacyl-CoA dehydrogenase activity. An NAD(+)-binding site is contributed by Asn454. Positions 501 and 660 each coordinate substrate.

The protein in the N-terminal section; belongs to the enoyl-CoA hydratase/isomerase family. This sequence in the C-terminal section; belongs to the 3-hydroxyacyl-CoA dehydrogenase family. As to quaternary structure, heterotetramer of two alpha chains (FadB) and two beta chains (FadA).

It catalyses the reaction a (3S)-3-hydroxyacyl-CoA + NAD(+) = a 3-oxoacyl-CoA + NADH + H(+). The enzyme catalyses a (3S)-3-hydroxyacyl-CoA = a (2E)-enoyl-CoA + H2O. The catalysed reaction is a 4-saturated-(3S)-3-hydroxyacyl-CoA = a (3E)-enoyl-CoA + H2O. It carries out the reaction (3S)-3-hydroxybutanoyl-CoA = (3R)-3-hydroxybutanoyl-CoA. It catalyses the reaction a (3Z)-enoyl-CoA = a 4-saturated (2E)-enoyl-CoA. The enzyme catalyses a (3E)-enoyl-CoA = a 4-saturated (2E)-enoyl-CoA. It functions in the pathway lipid metabolism; fatty acid beta-oxidation. In terms of biological role, involved in the aerobic and anaerobic degradation of long-chain fatty acids via beta-oxidation cycle. Catalyzes the formation of 3-oxoacyl-CoA from enoyl-CoA via L-3-hydroxyacyl-CoA. It can also use D-3-hydroxyacyl-CoA and cis-3-enoyl-CoA as substrate. The polypeptide is Fatty acid oxidation complex subunit alpha (Pseudomonas putida (Arthrobacter siderocapsulatus)).